The sequence spans 697 residues: Polyribonucleotide nucleotidyltransferase (697 aa).

Mg(2+) contacts are provided by Asp-488 and Asp-494. The KH domain occupies 555-614; sequence PTLLTLKINPDKIRDVIGKGGATIRALTEETGCTIDIEDDGSVKIYGETREKADEAVRRV. In terms of domain architecture, S1 motif spans 624–692; that stretch reads GAIYEGKVTR…QRGRIKLSMK (69 aa).

It belongs to the polyribonucleotide nucleotidyltransferase family. As to quaternary structure, component of the RNA degradosome, which is a multiprotein complex involved in RNA processing and mRNA degradation. Mg(2+) serves as cofactor.

The protein localises to the cytoplasm. The catalysed reaction is RNA(n+1) + phosphate = RNA(n) + a ribonucleoside 5'-diphosphate. Its function is as follows. Involved in mRNA degradation. Catalyzes the phosphorolysis of single-stranded polyribonucleotides processively in the 3'- to 5'-direction. The sequence is that of Polyribonucleotide nucleotidyltransferase from Alcanivorax borkumensis (strain ATCC 700651 / DSM 11573 / NCIMB 13689 / SK2).